The following is a 338-amino-acid chain: Ribosomal RNA large subunit methyltransferase F (338 aa).

The tract at residues 1-21 (MTQKKNKPTQKKKGLHPRNPH) is disordered.

Belongs to the methyltransferase superfamily. METTL16/RlmF family.

It is found in the cytoplasm. It carries out the reaction adenosine(1618) in 23S rRNA + S-adenosyl-L-methionine = N(6)-methyladenosine(1618) in 23S rRNA + S-adenosyl-L-homocysteine + H(+). Specifically methylates the adenine in position 1618 of 23S rRNA. This chain is Ribosomal RNA large subunit methyltransferase F, found in Photobacterium profundum (strain SS9).